The sequence spans 805 residues: Angiotensin-converting enzyme 2 (805 aa).

The N-terminal stretch at 1-17 (MSGSSWLLLSLVAVTAA) is a signal peptide. Over 18 to 740 (QSTIEEQAKT…LGPPNQPPVS (723 aa)) the chain is Extracellular. The Peptidase M2 domain maps to 19–607 (STIEEQAKTF…QNKNSFVGWS (589 aa)). Asn53, Asn90, and Asn103 each carry an N-linked (GlcNAc...) asparagine glycan. A disulfide bridge links Cys133 with Cys141. Arg169 lines the chloride pocket. Arg273 provides a ligand contact to substrate. N-linked (GlcNAc...) asparagine glycosylation is present at Asn322. Cys344 and Cys361 are joined by a disulfide. 345–346 (HP) lines the substrate pocket. Position 374 (His374) interacts with Zn(2+). Glu375 serves as the catalytic Proton acceptor. Zn(2+) contacts are provided by His378 and Glu402. An N-linked (GlcNAc...) asparagine glycan is attached at Asn432. Chloride is bound by residues Trp477 and Lys481. The active-site Proton donor is the His505. Tyr515 lines the substrate pocket. Cysteines 530 and 542 form a disulfide. N-linked (GlcNAc...) asparagine glycosylation is present at Asn546. The Collectrin-like domain maps to 614 to 805 (ADQSIKVRIS…QNTDDVQTSF (192 aa)). Residues 652–659 (RKYFLEVK) form an essential for cleavage by ADAM17 region. The N-linked (GlcNAc...) asparagine glycan is linked to Asn690. The essential for cleavage by TMPRSS11D and TMPRSS2 stretch occupies residues 697 to 716 (RTEVEKAIRMSRSRINDAFR). Residues 741-761 (IWLIVFGVVMGVIVVGIVVLI) traverse the membrane as a helical segment. The Cytoplasmic portion of the chain corresponds to 762 to 805 (FTGIRDRKKKNKARNEENPYASIDISKGENNPGFQNTDDVQTSF). Positions 772 to 805 (NKARNEENPYASIDISKGENNPGFQNTDDVQTSF) are disordered. Residues 778–786 (ENPYASIDI) carry the LIR motif. The residue at position 781 (Tyr781) is a Phosphotyrosine. The Endocytic sorting signal signature appears at 781 to 784 (YASI). The SH2-binding signature appears at 781 to 785 (YASID). Ser783 carries the post-translational modification Phosphoserine. Residue Lys788 forms a Glycyl lysine isopeptide (Lys-Gly) (interchain with G-Cter in ubiquitin) linkage. A compositionally biased stretch (polar residues) spans 789–805 (GENNPGFQNTDDVQTSF). Positions 792-795 (NPGF) match the PTB motif. Positions 803–805 (TSF) match the PDZ-binding motif.

The protein belongs to the peptidase M2 family. As to quaternary structure, homodimer. Interacts with the catalytically active form of TMPRSS2. Interacts with SLC6A19; this interaction is essential for expression and function of SLC6A19 in intestine. Interacts with ITGA5:ITGB1. Probably interacts (via endocytic sorting signal motif) with AP2M1; the interaction is inhibited by phosphorylation of Tyr-781. Interacts (via PDZ-binding motif) with NHERF1 (via PDZ domains); the interaction may enhance ACE2 membrane residence. It depends on Zn(2+) as a cofactor. The cofactor is chloride. In terms of processing, proteolytic cleavage by ADAM17 generates a secreted form. Also cleaved by serine proteases: TMPRSS2, TMPRSS11D and HPN/TMPRSS1. Post-translationally, phosphorylated. Phosphorylation at Tyr-781 probably inhibits interaction with AP2M1 and enables interactions with proteins containing SH2 domains. Ubiquitinated. Ubiquitinated on Lys-788 via 'Lys-48'-linked ubiquitin. 'Lys-48'-linked deubiquitinated by USP50 on the Lys-788; leading to its stabilization.

Its subcellular location is the secreted. It is found in the cell membrane. The protein resides in the cytoplasm. The protein localises to the cell projection. It localises to the cilium. Its subcellular location is the apical cell membrane. The enzyme catalyses angiotensin II + H2O = angiotensin-(1-7) + L-phenylalanine. It carries out the reaction angiotensin I + H2O = angiotensin-(1-9) + L-leucine. The catalysed reaction is bradykinin(1-8) + H2O = bradykinin(1-7) + L-phenylalanine. It catalyses the reaction neurotensin + H2O = neurotensin-(1-12) + L-leucine. The enzyme catalyses kinetensin + H2O = kinetensin-(1-8) + L-leucine. It carries out the reaction dynorphin A-(1-13) + H2O = dynorphin A-(1-12) + L-lysine. The catalysed reaction is apelin-13 + H2O = apelin-12 + L-phenylalanine. It catalyses the reaction [Pyr1]apelin-13 + H2O = [Pyr1]apelin-12 + L-phenylalanine. The enzyme catalyses apelin-17 + H2O = apelin-16 + L-phenylalanine. Essential counter-regulatory carboxypeptidase of the renin-angiotensin hormone system that is a critical regulator of blood volume, systemic vascular resistance, and thus cardiovascular homeostasis. Converts angiotensin I to angiotensin 1-9, a nine-amino acid peptide with anti-hypertrophic effects in cardiomyocytes, and angiotensin II to angiotensin 1-7, which then acts as a beneficial vasodilator and anti-proliferation agent, counterbalancing the actions of the vasoconstrictor angiotensin II. Also removes the C-terminal residue from three other vasoactive peptides, neurotensin, kinetensin, and des-Arg bradykinin, but is not active on bradykinin. Also cleaves other biological peptides, such as apelins, casomorphins and dynorphin A. Plays an important role in amino acid transport by acting as binding partner of amino acid transporter SLC6A19 in intestine, regulating trafficking, expression on the cell surface, and its catalytic activity. This Pongo abelii (Sumatran orangutan) protein is Angiotensin-converting enzyme 2 (ACE2).